Reading from the N-terminus, the 239-residue chain is Tetratricopeptide repeat protein 9B (239 aa).

Disordered stretches follow at residues 1 to 57 (MQRG…LGAA) and 99 to 126 (QGAR…SEEQ). Phosphoserine occurs at positions 7 and 27. Pro residues predominate over residues 16-31 (PEPPPRPPPALSPPGS). One copy of the TPR 1 repeat lies at 65-99 (AVAFKAEGQRCYREKKFREAIGKYHRALLQLKAAQ). The span at 106–116 (LPAPAPGPTSS) shows a compositional bias: pro residues. The stretch at 171–204 (FKATYRAGIAFYHLGDYARALRYLQEARSREPTD) is one TPR 2 repeat.

The protein belongs to the TTC9 family.

The polypeptide is Tetratricopeptide repeat protein 9B (TTC9B) (Homo sapiens (Human)).